The sequence spans 261 residues: Matrix metalloproteinase-26 (261 aa).

A signal peptide spans 1–17; sequence MQLVILRVTIFLPWCFA. Residues 18–89 constitute a propeptide that is removed on maturation; that stretch reads VPVPPAADHK…PHCGVPDGSD (72 aa). N-linked (GlcNAc...) asparagine glycosylation occurs at asparagine 64. The Cysteine switch motif lies at 80-87; sequence PHCGVPDG. Positions 82 and 208 each coordinate Zn(2+). Glutamate 209 is an active-site residue. Residues histidine 212 and histidine 218 each contribute to the Zn(2+) site. The N-linked (GlcNAc...) asparagine glycan is linked to asparagine 221.

The protein belongs to the peptidase M10A family. Requires Zn(2+) as cofactor. It depends on Ca(2+) as a cofactor. In terms of tissue distribution, expressed specifically in uterus and placenta. Is also widely expressed in malignant tumors from different sources as well as in diverse tumor cell lines.

It is found in the secreted. Its subcellular location is the extracellular space. The protein localises to the extracellular matrix. May hydrolyze collagen type IV, fibronectin, fibrinogen, beta-casein, type I gelatin and alpha-1 proteinase inhibitor. Is also able to activate progelatinase B. This chain is Matrix metalloproteinase-26 (MMP26), found in Homo sapiens (Human).